A 601-amino-acid chain; its full sequence is Arginine--tRNA ligase (601 aa).

The short motif at 135–145 (ANPTGPLHLGH) is the 'HIGH' region element.

Belongs to the class-I aminoacyl-tRNA synthetase family. In terms of assembly, monomer.

It localises to the cytoplasm. It carries out the reaction tRNA(Arg) + L-arginine + ATP = L-arginyl-tRNA(Arg) + AMP + diphosphate. This chain is Arginine--tRNA ligase, found in Gloeobacter violaceus (strain ATCC 29082 / PCC 7421).